The primary structure comprises 124 residues: MIYGIGTDIVYIPRILRISQKYGEKFLNKVYTKKEIEISKKYNSQEVRAKYFAKRFAAKEAFVKALGTGFSQGIIMKDIEIYSNIRGKPHLAITKDFISKDYKIHLSLSDDQDYATAFVVICVE.

Residues Asp-8 and Glu-60 each contribute to the Mg(2+) site.

The protein belongs to the P-Pant transferase superfamily. AcpS family. It depends on Mg(2+) as a cofactor.

It localises to the cytoplasm. It carries out the reaction apo-[ACP] + CoA = holo-[ACP] + adenosine 3',5'-bisphosphate + H(+). Transfers the 4'-phosphopantetheine moiety from coenzyme A to a Ser of acyl-carrier-protein. The sequence is that of Holo-[acyl-carrier-protein] synthase from Wolbachia pipientis subsp. Culex pipiens (strain wPip).